We begin with the raw amino-acid sequence, 415 residues long: Diaminopimelate decarboxylase (415 aa).

Lys54 carries the post-translational modification N6-(pyridoxal phosphate)lysine. Pyridoxal 5'-phosphate contacts are provided by residues Gly223 and Glu264–Arg267. Residues Arg267, Arg303, and Tyr307 each contribute to the substrate site. The active-site Proton donor is the Cys338. 2 residues coordinate substrate: Glu339 and Tyr374. Pyridoxal 5'-phosphate is bound at residue Tyr374.

Belongs to the Orn/Lys/Arg decarboxylase class-II family. LysA subfamily. As to quaternary structure, homodimer. Pyridoxal 5'-phosphate is required as a cofactor.

It catalyses the reaction meso-2,6-diaminopimelate + H(+) = L-lysine + CO2. It functions in the pathway amino-acid biosynthesis; L-lysine biosynthesis via DAP pathway; L-lysine from DL-2,6-diaminopimelate: step 1/1. Specifically catalyzes the decarboxylation of meso-diaminopimelate (meso-DAP) to L-lysine. The polypeptide is Diaminopimelate decarboxylase (Buchnera aphidicola subsp. Schizaphis graminum (strain Sg)).